A 409-amino-acid polypeptide reads, in one-letter code: tRNA(Met) cytidine acetate ligase (409 aa).

ATP-binding positions include 7–20 (VVEYNPMHNGHLYH), G102, N169, and R194.

Belongs to the TmcAL family.

It is found in the cytoplasm. It catalyses the reaction cytidine(34) in elongator tRNA(Met) + acetate + ATP = N(4)-acetylcytidine(34) in elongator tRNA(Met) + AMP + diphosphate. Catalyzes the formation of N(4)-acetylcytidine (ac(4)C) at the wobble position of elongator tRNA(Met), using acetate and ATP as substrates. First activates an acetate ion to form acetyladenylate (Ac-AMP) and then transfers the acetyl group to tRNA to form ac(4)C34. This Clostridium botulinum (strain Okra / Type B1) protein is tRNA(Met) cytidine acetate ligase.